We begin with the raw amino-acid sequence, 565 residues long: Proline--tRNA ligase (565 aa).

This sequence belongs to the class-II aminoacyl-tRNA synthetase family. ProS type 1 subfamily. In terms of assembly, homodimer.

Its subcellular location is the cytoplasm. It carries out the reaction tRNA(Pro) + L-proline + ATP = L-prolyl-tRNA(Pro) + AMP + diphosphate. Functionally, catalyzes the attachment of proline to tRNA(Pro) in a two-step reaction: proline is first activated by ATP to form Pro-AMP and then transferred to the acceptor end of tRNA(Pro). As ProRS can inadvertently accommodate and process non-cognate amino acids such as alanine and cysteine, to avoid such errors it has two additional distinct editing activities against alanine. One activity is designated as 'pretransfer' editing and involves the tRNA(Pro)-independent hydrolysis of activated Ala-AMP. The other activity is designated 'posttransfer' editing and involves deacylation of mischarged Ala-tRNA(Pro). The misacylated Cys-tRNA(Pro) is not edited by ProRS. The polypeptide is Proline--tRNA ligase (Francisella tularensis subsp. holarctica (strain FTNF002-00 / FTA)).